Here is a 241-residue protein sequence, read N- to C-terminus: DNA repair protein RecO (241 aa).

Belongs to the RecO family.

Functionally, involved in DNA repair and RecF pathway recombination. The sequence is that of DNA repair protein RecO from Dinoroseobacter shibae (strain DSM 16493 / NCIMB 14021 / DFL 12).